The following is a 194-amino-acid chain: Thymidine kinase (194 aa).

Residues 15–22 (GCMFSGKT) and 88–91 (DELH) each bind ATP. Glu-89 functions as the Proton acceptor in the catalytic mechanism. Residues Cys-148, Cys-151, Cys-186, and Cys-189 each contribute to the Zn(2+) site.

This sequence belongs to the thymidine kinase family. In terms of assembly, homotetramer.

It localises to the cytoplasm. The enzyme catalyses thymidine + ATP = dTMP + ADP + H(+). In Roseiflexus castenholzii (strain DSM 13941 / HLO8), this protein is Thymidine kinase.